Here is a 444-residue protein sequence, read N- to C-terminus: Tol-Pal system protein TolB (444 aa).

A signal peptide spans 1–19; sequence MRNIIYFILLLLFSFKGYA.

Belongs to the TolB family. In terms of assembly, the Tol-Pal system is composed of five core proteins: the inner membrane proteins TolA, TolQ and TolR, the periplasmic protein TolB and the outer membrane protein Pal. They form a network linking the inner and outer membranes and the peptidoglycan layer.

The protein localises to the periplasm. Functionally, part of the Tol-Pal system, which plays a role in outer membrane invagination during cell division and is important for maintaining outer membrane integrity. This chain is Tol-Pal system protein TolB, found in Rickettsia akari (strain Hartford).